The chain runs to 360 residues: 3-dehydroquinate synthase (360 aa).

NAD(+) contacts are provided by residues 106-110, 130-131, Lys-143, and Lys-152; these read GVIGD and TS. Residues Glu-185, His-246, and His-262 each coordinate Zn(2+).

This sequence belongs to the sugar phosphate cyclases superfamily. Dehydroquinate synthase family. Co(2+) is required as a cofactor. The cofactor is Zn(2+). NAD(+) serves as cofactor.

The protein localises to the cytoplasm. It carries out the reaction 7-phospho-2-dehydro-3-deoxy-D-arabino-heptonate = 3-dehydroquinate + phosphate. Its pathway is metabolic intermediate biosynthesis; chorismate biosynthesis; chorismate from D-erythrose 4-phosphate and phosphoenolpyruvate: step 2/7. Functionally, catalyzes the conversion of 3-deoxy-D-arabino-heptulosonate 7-phosphate (DAHP) to dehydroquinate (DHQ). In Leuconostoc citreum (strain KM20), this protein is 3-dehydroquinate synthase.